Reading from the N-terminus, the 87-residue chain is COMM domain-containing protein 6 (87 aa).

Position 1 is an N-acetylmethionine (Met-1). The COMM domain occupies 20-87; the sequence is QLIDFQWKLG…KEIAAVIETV (68 aa).

This sequence belongs to the COMM domain-containing protein 6 family. In terms of assembly, component of the commander complex consisting of the CCC subcomplex and the retriever subcomplex. Component of the CCC (COMMD/CCDC22/CCDC93) subcomplex consisting of COMMD1, COMMD2, COMMD3, COMMD4, COMMD5, COMMD6, COMMD7, COMMD8, COMMD9, COMMD10, CCDC22 and CCDC93; within the complex forms a heterodimer with COMMD1. May form a homodimer with isoform 1. Interacts with RELA, RELB, NFKB1/p105. Does not interact with NFKBIB. Interacts with CCDC22, CCDC93, SCNN1B, CUL4A.

It is found in the nucleus. Its subcellular location is the cytoplasm. Its function is as follows. Scaffold protein in the commander complex that is essential for endosomal recycling of transmembrane cargos; the commander complex is composed of the CCC subcomplex and the retriever subcomplex. May modulate activity of cullin-RING E3 ubiquitin ligase (CRL) complexes. Down-regulates activation of NF-kappa-B. Inhibits TNF-induced NFKB1 activation. This is COMM domain-containing protein 6 (Commd6) from Mus musculus (Mouse).